A 1032-amino-acid chain; its full sequence is Integrin alpha-4 (1032 aa).

Positions 1 to 34 (MIRDLGKVGKVSLLLDHIWTGILLYTVILTPADC) are cleaved as a signal peptide. At 35–974 (YNIDESSPML…LHNLKPKKHV (940 aa)) the chain is on the extracellular side. FG-GAP repeat units lie at residues 36 to 100 (NIDE…PNRT), 113 to 177 (KCGK…TELS), 186 to 237 (DHVR…TIKS), 238 to 291 (YVDL…EKQL), 292 to 351 (TILF…GAME), 353 to 411 (LKFE…GITP), and 415 to 477 (QRLQ…LPST). Asn81 and Asn98 each carry an N-linked (GlcNAc...) asparagine glycan. 3 cysteine pairs are disulfide-bonded: Cys91/Cys101, Cys144/Cys165, and Cys183/Cys198. Asn229 is a glycosylation site (N-linked (GlcNAc...) asparagine). Asp314, Asn316, Asp318, Leu320, Asp322, Asp376, Asp378, Asp380, Asp384, Asp438, Asp440, Asn442, Tyr444, and Asp446 together coordinate Ca(2+). The N-linked (GlcNAc...) asparagine glycan is linked to Asn479. Residues Cys485 and Cys494 are joined by a disulfide bond. N-linked (GlcNAc...) asparagine glycans are attached at residues Asn496, Asn517, Asn537, Asn626, and Asn660. 2 cysteine pairs are disulfide-bonded: Cys500-Cys556 and Cys622-Cys627. Cys698 and Cys712 are oxidised to a cystine. Residues Asn746 and Asn857 are each glycosylated (N-linked (GlcNAc...) asparagine). Intrachain disulfides connect Cys853–Cys889 and Cys896–Cys901. Residues 975 to 998 (IYMIIGISLLLGILLFSLLTYILW) form a helical membrane-spanning segment. Over 999-1032 (KVGFFRRKYQPIGTEETSRRESWNYLNKDEKEVK) the chain is Cytoplasmic. The GFFKR motif signature appears at 1001–1005 (GFFRR).

It belongs to the integrin alpha chain family. As to quaternary structure, heterodimer of an alpha and a beta subunit.

The protein resides in the membrane. Its function is as follows. Fibronectin and V-CAM adhesion receptor. In Xenopus laevis (African clawed frog), this protein is Integrin alpha-4 (itga4).